Reading from the N-terminus, the 263-residue chain is Reductase pytE (263 aa).

This sequence belongs to the avfA family.

It participates in secondary metabolite biosynthesis. Reductase; part of the gene cluster that mediates the biosynthesis of pyranterreones, a family of antioxidative compounds. The first step of pyranonigrins biosynthesis is performed by the hybrid PKS-NRPS synthetase pytA that condenses 4 malonyl-CoA units ato the acetyl starter unit by the modular PKS of pytA. The acyl chain is then connected to an L-serine through the amide bond by the modular NRPS of pytA. A tetramic acid is formed and released from the PKS-NRPS pytA to give pyranterreone 5 with the help of the thioesterase pytI. Pyranterreone 5 could be methylated by pytC to afford pyranterreone 6. Both pyranterreones 5 and 6 are subsequently oxidized by the FAD-linked oxidoreductase pytB and the cytochrome P450 monooxygenase pytD to form the fused gamma-pyrone core, resulting in pyranterreones 7 and 11, respectively. The hydroxy group at C-8 of pyranterreones 7 and 11 are dehydrated by the aspartyl protease pytH to form a delta-7 double bond to give pyranterreones 3 and 1, 2 accordingly. The exo-methylene of pyranterreone 3 could be reduced into a pendant methyl by reductase pytE to provide pyranterreone 4, also known as cordylactam. Pyranterreone 4 can be reconverted to pyranterreone 3 through pytB-catalyzed dehydrogenation or further oxidized to pyranterreones 9 and 10. The chain is Reductase pytE from Aspergillus terreus.